The sequence spans 119 residues: Large ribosomal subunit protein uL18 (119 aa).

This sequence belongs to the universal ribosomal protein uL18 family. Part of the 50S ribosomal subunit; part of the 5S rRNA/L5/L18/L25 subcomplex. Contacts the 5S and 23S rRNAs.

Its function is as follows. This is one of the proteins that bind and probably mediate the attachment of the 5S RNA into the large ribosomal subunit, where it forms part of the central protuberance. In Clostridium botulinum (strain Loch Maree / Type A3), this protein is Large ribosomal subunit protein uL18.